The primary structure comprises 445 residues: Argininosuccinate synthase (445 aa).

Residues 17–25 (AFSGGLDTS) and Ala43 each bind ATP. Position 99 (Tyr99) interacts with L-citrulline. Residues Gly129 and Thr131 each contribute to the ATP site. Residues Thr131, Asn135, and Asp136 each contribute to the L-aspartate site. Residue Asn135 coordinates L-citrulline. ATP is bound at residue Asp136. Positions 139 and 192 each coordinate L-citrulline. Position 194 (Asp194) interacts with ATP. L-citrulline contacts are provided by Thr201, Glu203, and Glu280.

This sequence belongs to the argininosuccinate synthase family. Type 2 subfamily. As to quaternary structure, homotetramer.

The protein localises to the cytoplasm. The enzyme catalyses L-citrulline + L-aspartate + ATP = 2-(N(omega)-L-arginino)succinate + AMP + diphosphate + H(+). It participates in amino-acid biosynthesis; L-arginine biosynthesis; L-arginine from L-ornithine and carbamoyl phosphate: step 2/3. This Bordetella pertussis (strain Tohama I / ATCC BAA-589 / NCTC 13251) protein is Argininosuccinate synthase.